A 122-amino-acid polypeptide reads, in one-letter code: Basic phospholipase A2 Cdr-13 (122 aa).

7 disulfides stabilise this stretch: Cys26/Cys115, Cys28/Cys44, Cys43/Cys95, Cys49/Cys122, Cys50/Cys88, Cys57/Cys81, and Cys75/Cys86. Tyr27, Gly29, and Gly31 together coordinate Ca(2+). Residue His47 is part of the active site. Asp48 serves as a coordination point for Ca(2+). Asp89 is a catalytic residue.

Requires Ca(2+) as cofactor. Expressed by the venom gland.

The protein localises to the secreted. The enzyme catalyses a 1,2-diacyl-sn-glycero-3-phosphocholine + H2O = a 1-acyl-sn-glycero-3-phosphocholine + a fatty acid + H(+). Its function is as follows. Snake venom phospholipase A2 (PLA2) that induces myonecrosis and edema upon subcutaneous injections in mice. In vitro, causes a potent blockade of neuromuscular transmission in young chicken biventer cervicis preparation and produces cytotoxicity in murine C2C12 skeletal muscle myotubes and lack cytolytic activity upon myoblasts in vitro. PLA2 catalyzes the calcium-dependent hydrolysis of the 2-acyl groups in 3-sn-phosphoglycerides. The polypeptide is Basic phospholipase A2 Cdr-13 (Crotalus durissus ruruima (South American rattlesnake)).